The following is a 376-amino-acid chain: Peroxisomal targeting signal 2 receptor (376 aa).

WD repeat units follow at residues 58 to 98 (DTQD…YPVM), 102 to 142 (EHQR…NTSL), 182 to 222 (DNND…PLFM), 226 to 267 (AHNG…PNVH), 279 to 319 (GHEF…TSRV), and 339 to 376 (AHTE…QRLQ).

It belongs to the WD repeat peroxin-7 family. As to quaternary structure, interacts with PEX20. Polyubiquitinated, leading to its degradation by the proteasome. Ubiquitination is dependent of PEX5 and PEX20 and takes place following recycling into the cytosol.

The protein resides in the cytoplasm. It is found in the cytosol. It localises to the peroxisome matrix. Receptor required for the peroxisomal import of proteins containing a C-terminal PTS2-type peroxisomal targeting signal, such as 3-oxoacyl-CoA thiolase. Specifically binds to cargo proteins containing a PTS2 peroxisomal targeting signal in the cytosol. Cargo protein-binding triggers interaction with PEX20 and formation of a ternary complex composed of PEX20 and PEX7 along with PTS2-containing cargo proteins, which is tranlocated into peroxisomes by passing through the peroxisomal docking complex. PEX7 receptor is then retrotranslocated into the cytosol, where it is ubiquitinated and degraded. The polypeptide is Peroxisomal targeting signal 2 receptor (Komagataella phaffii (strain GS115 / ATCC 20864) (Yeast)).